The sequence spans 491 residues: Glutamyl-tRNA(Gln) amidotransferase subunit A (491 aa).

Catalysis depends on charge relay system residues lysine 76 and serine 154. Serine 178 serves as the catalytic Acyl-ester intermediate.

It belongs to the amidase family. GatA subfamily. As to quaternary structure, heterotrimer of A, B and C subunits.

The enzyme catalyses L-glutamyl-tRNA(Gln) + L-glutamine + ATP + H2O = L-glutaminyl-tRNA(Gln) + L-glutamate + ADP + phosphate + H(+). Allows the formation of correctly charged Gln-tRNA(Gln) through the transamidation of misacylated Glu-tRNA(Gln) in organisms which lack glutaminyl-tRNA synthetase. The reaction takes place in the presence of glutamine and ATP through an activated gamma-phospho-Glu-tRNA(Gln). The polypeptide is Glutamyl-tRNA(Gln) amidotransferase subunit A (Cereibacter sphaeroides (strain KD131 / KCTC 12085) (Rhodobacter sphaeroides)).